The sequence spans 442 residues: NADH-quinone oxidoreductase subunit D (442 aa).

The protein belongs to the complex I 49 kDa subunit family. As to quaternary structure, NDH-1 is composed of 14 different subunits. Subunits NuoB, C, D, E, F, and G constitute the peripheral sector of the complex.

Its subcellular location is the cell membrane. It carries out the reaction a quinone + NADH + 5 H(+)(in) = a quinol + NAD(+) + 4 H(+)(out). Functionally, NDH-1 shuttles electrons from NADH, via FMN and iron-sulfur (Fe-S) centers, to quinones in the respiratory chain. The immediate electron acceptor for the enzyme in this species is believed to be a menaquinone. Couples the redox reaction to proton translocation (for every two electrons transferred, four hydrogen ions are translocated across the cytoplasmic membrane), and thus conserves the redox energy in a proton gradient. The sequence is that of NADH-quinone oxidoreductase subunit D from Mycolicibacterium vanbaalenii (strain DSM 7251 / JCM 13017 / BCRC 16820 / KCTC 9966 / NRRL B-24157 / PYR-1) (Mycobacterium vanbaalenii).